Reading from the N-terminus, the 633-residue chain is Phosphomethylpyrimidine synthase (633 aa).

Positions 1-13 (MNIRSNPDTTLPA) are enriched in polar residues. The disordered stretch occupies residues 1-20 (MNIRSNPDTTLPAVTTGPLP). Substrate contacts are provided by residues Asn221, Met250, Tyr279, His315, 335–337 (SRG), 376–379 (DGLR), and Glu415. His419 lines the Zn(2+) pocket. Tyr442 lines the substrate pocket. His483 contributes to the Zn(2+) binding site. [4Fe-4S] cluster-binding residues include Cys563, Cys566, and Cys571.

This sequence belongs to the ThiC family. Homodimer. The cofactor is [4Fe-4S] cluster.

It carries out the reaction 5-amino-1-(5-phospho-beta-D-ribosyl)imidazole + S-adenosyl-L-methionine = 4-amino-2-methyl-5-(phosphooxymethyl)pyrimidine + CO + 5'-deoxyadenosine + formate + L-methionine + 3 H(+). Its pathway is cofactor biosynthesis; thiamine diphosphate biosynthesis. Functionally, catalyzes the synthesis of the hydroxymethylpyrimidine phosphate (HMP-P) moiety of thiamine from aminoimidazole ribotide (AIR) in a radical S-adenosyl-L-methionine (SAM)-dependent reaction. The protein is Phosphomethylpyrimidine synthase of Bradyrhizobium sp. (strain ORS 278).